Consider the following 198-residue polypeptide: Holliday junction branch migration complex subunit RuvA (198 aa).

Residues 1 to 64 (MYEYIKGKYI…EDFIGLYGFD (64 aa)) form a domain I region. Residues 65 to 143 (SKEELEMFKL…PDELVDSSLE (79 aa)) form a domain II region. The segment at 144 to 149 (IDTKDN) is flexible linker. The interval 150–198 (ENVMALSEALSALIALGYSEKEAESVLKKIDKNDSVENIIKNALKALMG) is domain III.

Belongs to the RuvA family. As to quaternary structure, homotetramer. Forms an RuvA(8)-RuvB(12)-Holliday junction (HJ) complex. HJ DNA is sandwiched between 2 RuvA tetramers; dsDNA enters through RuvA and exits via RuvB. An RuvB hexamer assembles on each DNA strand where it exits the tetramer. Each RuvB hexamer is contacted by two RuvA subunits (via domain III) on 2 adjacent RuvB subunits; this complex drives branch migration. In the full resolvosome a probable DNA-RuvA(4)-RuvB(12)-RuvC(2) complex forms which resolves the HJ.

It localises to the cytoplasm. The RuvA-RuvB-RuvC complex processes Holliday junction (HJ) DNA during genetic recombination and DNA repair, while the RuvA-RuvB complex plays an important role in the rescue of blocked DNA replication forks via replication fork reversal (RFR). RuvA specifically binds to HJ cruciform DNA, conferring on it an open structure. The RuvB hexamer acts as an ATP-dependent pump, pulling dsDNA into and through the RuvAB complex. HJ branch migration allows RuvC to scan DNA until it finds its consensus sequence, where it cleaves and resolves the cruciform DNA. This is Holliday junction branch migration complex subunit RuvA from Clostridium beijerinckii (strain ATCC 51743 / NCIMB 8052) (Clostridium acetobutylicum).